The primary structure comprises 91 residues: MSSRRGGGGGGGRITDEEINELISKLQALLPESSRSRGASRSSASKLLKETCSYIKSLHREVDDLSDRLSELMSTMDNNSPQAEIIRSLLR.

A bHLH domain is found at 3 to 58; the sequence is SRRGGGGGGGRITDEEINELISKLQALLPESSRSRGASRSSASKLLKETCSYIKSL.

This sequence belongs to the bHLH protein family.

In terms of biological role, atypical and probable non DNA-binding bHLH transcription that integrates multiple signaling pathways to regulate cell elongation and plant development. The chain is Transcription factor ILI3 (ILI3) from Oryza sativa subsp. indica (Rice).